The sequence spans 637 residues: Choline O-acetyltransferase (637 aa).

Positions 1 to 13 are enriched in basic and acidic residues; the sequence is MPVSKREQSKDTG. A disordered region spans residues 1–20; the sequence is MPVSKREQSKDTGDPCALPK. The Proton acceptor role is filled by His329. CoA contacts are provided by residues 407-419, Ser445, and Gln545; that span reads GKEFIKRQKMSPD.

Belongs to the carnitine/choline acetyltransferase family.

The catalysed reaction is choline + acetyl-CoA = acetylcholine + CoA. In terms of biological role, catalyzes the reversible synthesis of acetylcholine (ACh) from acetyl CoA and choline at cholinergic synapses. The protein is Choline O-acetyltransferase (chat) of Danio rerio (Zebrafish).